Consider the following 145-residue polypeptide: Large-conductance mechanosensitive channel (145 aa).

A run of 2 helical transmembrane segments spans residues 30–50 (VAVVIGGAFTSIVNAFVAWLM) and 74–94 (GELVIAIINFLIIAFVIFLII).

The protein belongs to the MscL family. In terms of assembly, homopentamer.

Its subcellular location is the cell inner membrane. Functionally, channel that opens in response to stretch forces in the membrane lipid bilayer. May participate in the regulation of osmotic pressure changes within the cell. In Synechocystis sp. (strain ATCC 27184 / PCC 6803 / Kazusa), this protein is Large-conductance mechanosensitive channel.